We begin with the raw amino-acid sequence, 172 residues long: Adenine phosphoribosyltransferase (172 aa).

Belongs to the purine/pyrimidine phosphoribosyltransferase family. As to quaternary structure, homodimer.

It is found in the cytoplasm. The catalysed reaction is AMP + diphosphate = 5-phospho-alpha-D-ribose 1-diphosphate + adenine. The protein operates within purine metabolism; AMP biosynthesis via salvage pathway; AMP from adenine: step 1/1. Its function is as follows. Catalyzes a salvage reaction resulting in the formation of AMP, that is energically less costly than de novo synthesis. In Streptococcus agalactiae serotype III (strain NEM316), this protein is Adenine phosphoribosyltransferase.